A 581-amino-acid polypeptide reads, in one-letter code: Arginine--tRNA ligase (581 aa).

Positions 131 to 141 match the 'HIGH' region motif; the sequence is ANPTGPLHVGH.

The protein belongs to the class-I aminoacyl-tRNA synthetase family. As to quaternary structure, monomer.

Its subcellular location is the cytoplasm. The catalysed reaction is tRNA(Arg) + L-arginine + ATP = L-arginyl-tRNA(Arg) + AMP + diphosphate. The sequence is that of Arginine--tRNA ligase from Nitrosospira multiformis (strain ATCC 25196 / NCIMB 11849 / C 71).